Reading from the N-terminus, the 231-residue chain is Transmembrane protein 225 (231 aa).

Residues 1-13 (MVHILVRKVEATN) lie on the Cytoplasmic side of the membrane. A helical transmembrane segment spans residues 14-34 (MFFSSWTLVFLAVGIIIEEWA). Residues 35-67 (ELKLGPQKPTITHSPWICCTPLWPSDGLEVIRN) are Extracellular-facing. Residues 68–88 (ILIVVLSLSFMHNLLLGFEFT) form a helical membrane-spanning segment. Residues 89–97 (YMIPQTKYT) lie on the Cytoplasmic side of the membrane. Residues 98–118 (LIMTACLAFLTGILLLGALLL) form a helical membrane-spanning segment. Residues 119–135 (YHHMLRQGESVYYSSYK) lie on the Extracellular side of the membrane. Residues 136–156 (ISWIIFTAYLNVLFLFISGFL) traverse the membrane as a helical segment. The Cytoplasmic segment spans residues 157-231 (SLLQYKQPID…IQARRVTWAL (75 aa)). Residues 225 to 229 (RRVTW) carry the RVxF motif.

Interacts (via RVxF motif) with PPP1CC.

Its subcellular location is the cytoplasmic vesicle. The protein resides in the secretory vesicle. It localises to the acrosome membrane. Probably inhibits protein phosphatase 1 (PP1) in sperm via binding to catalytic subunit PPP1CC. This Bos taurus (Bovine) protein is Transmembrane protein 225 (TMEM225).